A 154-amino-acid chain; its full sequence is Myoglobin (154 aa).

In terms of domain architecture, Globin spans 2-148 (GLSDGEWQLV…FRNDMAAKYK (147 aa)). Serine 4 carries the post-translational modification Phosphoserine. Position 65 (histidine 65) interacts with nitrite. Histidine 65 is an O2 binding site. The residue at position 68 (threonine 68) is a Phosphothreonine. Histidine 94 serves as a coordination point for heme b.

The protein belongs to the globin family. In terms of assembly, monomeric.

The protein localises to the cytoplasm. Its subcellular location is the sarcoplasm. It catalyses the reaction Fe(III)-heme b-[protein] + nitric oxide + H2O = Fe(II)-heme b-[protein] + nitrite + 2 H(+). The catalysed reaction is H2O2 + AH2 = A + 2 H2O. Functionally, monomeric heme protein which primary function is to store oxygen and facilitate its diffusion within muscle tissues. Reversibly binds oxygen through a pentacoordinated heme iron and enables its timely and efficient release as needed during periods of heightened demand. Depending on the oxidative conditions of tissues and cells, and in addition to its ability to bind oxygen, it also has a nitrite reductase activity whereby it regulates the production of bioactive nitric oxide. Under stress conditions, like hypoxia and anoxia, it also protects cells against reactive oxygen species thanks to its pseudoperoxidase activity. The chain is Myoglobin (MB) from Sus scrofa (Pig).